The primary structure comprises 404 residues: ORC1-type DNA replication protein 2 (404 aa).

Residues 64-68 (TGKTS), Tyr205, and Arg217 contribute to the ATP site.

Belongs to the CDC6/cdc18 family. As to quaternary structure, interacts with MCM.

Its function is as follows. Involved in regulation of DNA replication. Stimulates the helicase activity of MCM via stimulation of its ATPase activity. Binding to MCM may result in conformational changes in MCM, leading to catalytic ATP hydrolysis by the helicase. Directly stimulates MCM movement along single-stranded and double-stranded DNA. Does not bind DNA. The polypeptide is ORC1-type DNA replication protein 2 (cdc6-2) (Thermoplasma acidophilum (strain ATCC 25905 / DSM 1728 / JCM 9062 / NBRC 15155 / AMRC-C165)).